A 93-amino-acid polypeptide reads, in one-letter code: Putative hemolysin E-like protein (93 aa).

It belongs to the hemolysin E family.

The chain is Putative hemolysin E-like protein from Escherichia coli O6:H1 (strain CFT073 / ATCC 700928 / UPEC).